Consider the following 531-residue polypeptide: Putative cysteine ligase BshC (531 aa).

Residues 447–481 (KAQEKKQTKGLDNLEKRLLKAEKKMHSEKLKKIIE) are a coiled coil.

The protein belongs to the BshC family.

The polypeptide is Putative cysteine ligase BshC (Flavobacterium psychrophilum (strain ATCC 49511 / DSM 21280 / CIP 103535 / JIP02/86)).